Here is a 304-residue protein sequence, read N- to C-terminus: Acetylglutamate kinase (304 aa).

Substrate contacts are provided by residues 74–75 (GG), R96, and N201.

The protein belongs to the acetylglutamate kinase family. ArgB subfamily.

It is found in the cytoplasm. The catalysed reaction is N-acetyl-L-glutamate + ATP = N-acetyl-L-glutamyl 5-phosphate + ADP. The protein operates within amino-acid biosynthesis; L-arginine biosynthesis; N(2)-acetyl-L-ornithine from L-glutamate: step 2/4. In terms of biological role, catalyzes the ATP-dependent phosphorylation of N-acetyl-L-glutamate. This chain is Acetylglutamate kinase, found in Alkalilimnicola ehrlichii (strain ATCC BAA-1101 / DSM 17681 / MLHE-1).